Here is a 311-residue protein sequence, read N- to C-terminus: Meteorin-like protein (311 aa).

Positions 1–45 are cleaved as a signal peptide; that stretch reads MRGAVWAARRRAGQQWPRSPGPGPGPPPPPPLLLLLLLLLGGASA. Cysteines 52 and 75 form a disulfide. N-linked (GlcNAc...) asparagine glycosylation is present at Asn103. Intrachain disulfides connect Cys107-Cys143, Cys188-Cys260, Cys191-Cys284, and Cys201-Cys306.

This sequence belongs to the meteorin family. Post-translationally, N-glycosylated. In terms of tissue distribution, highly expressed in subcutaneous adipose tissue.

It localises to the secreted. Its function is as follows. Hormone induced following exercise or cold exposure that promotes energy expenditure. Induced either in the skeletal muscle after exercise or in adipose tissue following cold exposure and is present in the circulation. Able to stimulate energy expenditure associated with the browning of the white fat depots and improves glucose tolerance. Does not promote an increase in a thermogenic gene program via direct action on adipocytes, but acts by stimulating several immune cell subtypes to enter the adipose tissue and activate their prothermogenic actions. Stimulates an eosinophil-dependent increase in IL4 expression and promotes alternative activation of adipose tissue macrophages, which are required for the increased expression of the thermogenic and anti-inflammatory gene programs in fat. Required for some cold-induced thermogenic responses, suggesting a role in metabolic adaptations to cold temperatures. The protein is Meteorin-like protein (Metrnl) of Mus musculus (Mouse).